We begin with the raw amino-acid sequence, 288 residues long: 4-hydroxybenzoate octaprenyltransferase (288 aa).

The next 8 membrane-spanning stretches (helical) occupy residues 23–43 (IGSL…GRGI), 46–66 (AKIL…GCVV), 98–118 (ILFV…NSMT), 141–161 (LPQV…FAAV), 163–183 (ESLP…TVAY), 213–233 (LIIG…GWLM), 234–254 (NLGG…THQQ), and 268–288 (AFLN…ISYW).

The protein belongs to the UbiA prenyltransferase family. Mg(2+) is required as a cofactor.

It localises to the cell inner membrane. The catalysed reaction is all-trans-octaprenyl diphosphate + 4-hydroxybenzoate = 4-hydroxy-3-(all-trans-octaprenyl)benzoate + diphosphate. It functions in the pathway cofactor biosynthesis; ubiquinone biosynthesis. Functionally, catalyzes the prenylation of para-hydroxybenzoate (PHB) with an all-trans polyprenyl group. Mediates the second step in the final reaction sequence of ubiquinone-8 (UQ-8) biosynthesis, which is the condensation of the polyisoprenoid side chain with PHB, generating the first membrane-bound Q intermediate 3-octaprenyl-4-hydroxybenzoate. The protein is 4-hydroxybenzoate octaprenyltransferase of Yersinia pseudotuberculosis serotype O:1b (strain IP 31758).